The sequence spans 232 residues: Ribosomal RNA small subunit methyltransferase G (232 aa).

S-adenosyl-L-methionine-binding positions include Gly93, Leu98, 144 to 145 (VE), and Arg163.

The protein belongs to the methyltransferase superfamily. RNA methyltransferase RsmG family.

It localises to the cytoplasm. It carries out the reaction guanosine(527) in 16S rRNA + S-adenosyl-L-methionine = N(7)-methylguanosine(527) in 16S rRNA + S-adenosyl-L-homocysteine. Its function is as follows. Specifically methylates the N7 position of guanine in position 527 of 16S rRNA. The sequence is that of Ribosomal RNA small subunit methyltransferase G from Burkholderia pseudomallei (strain 668).